Here is an 830-residue protein sequence, read N- to C-terminus: DNA gyrase subunit A (830 aa).

The region spanning 33-497 is the Topo IIA-type catalytic domain; it reads LPDVRDGLKP…AENDIDIEDL (465 aa). The active-site O-(5'-phospho-DNA)-tyrosine intermediate is the Tyr121. Residues 524–530 carry the GyrA-box motif; that stretch reads QKRGGRG. The tract at residues 805–830 is disordered; sequence KDDSEQLEDSEEVSEVHDAEENNSEE.

This sequence belongs to the type II topoisomerase GyrA/ParC subunit family. Heterotetramer, composed of two GyrA and two GyrB chains. In the heterotetramer, GyrA contains the active site tyrosine that forms a transient covalent intermediate with DNA, while GyrB binds cofactors and catalyzes ATP hydrolysis.

The protein resides in the cytoplasm. The enzyme catalyses ATP-dependent breakage, passage and rejoining of double-stranded DNA.. Its function is as follows. A type II topoisomerase that negatively supercoils closed circular double-stranded (ds) DNA in an ATP-dependent manner to modulate DNA topology and maintain chromosomes in an underwound state. Negative supercoiling favors strand separation, and DNA replication, transcription, recombination and repair, all of which involve strand separation. Also able to catalyze the interconversion of other topological isomers of dsDNA rings, including catenanes and knotted rings. Type II topoisomerases break and join 2 DNA strands simultaneously in an ATP-dependent manner. In Clostridium acetobutylicum (strain ATCC 824 / DSM 792 / JCM 1419 / IAM 19013 / LMG 5710 / NBRC 13948 / NRRL B-527 / VKM B-1787 / 2291 / W), this protein is DNA gyrase subunit A.